Here is a 316-residue protein sequence, read N- to C-terminus: tRNA dimethylallyltransferase (316 aa).

Residue 17–24 (GPTASGKT) coordinates ATP. 19-24 (TASGKT) is a substrate binding site. Interaction with substrate tRNA stretches follow at residues 42–45 (DSAL), 166–170 (QRLSR), and 247–252 (RCVGYR).

It belongs to the IPP transferase family. Monomer. Requires Mg(2+) as cofactor.

It catalyses the reaction adenosine(37) in tRNA + dimethylallyl diphosphate = N(6)-dimethylallyladenosine(37) in tRNA + diphosphate. In terms of biological role, catalyzes the transfer of a dimethylallyl group onto the adenine at position 37 in tRNAs that read codons beginning with uridine, leading to the formation of N6-(dimethylallyl)adenosine (i(6)A). In Salmonella schwarzengrund (strain CVM19633), this protein is tRNA dimethylallyltransferase.